Here is a 281-residue protein sequence, read N- to C-terminus: Energy-coupling factor transporter ATP-binding protein EcfA1 (281 aa).

Residues 7–242 (ISVEDIVFRY…NKELVRIGLD (236 aa)) form the ABC transporter domain. 42-49 (GHNGSGKS) is an ATP binding site. Glutamate 168 (proton acceptor) is an active-site residue.

It belongs to the ABC transporter superfamily. Energy-coupling factor EcfA family. In terms of assembly, forms a stable energy-coupling factor (ECF) transporter complex composed of 2 membrane-embedded substrate-binding proteins (S component), 2 ATP-binding proteins (A component) and 2 transmembrane proteins (T component).

Its subcellular location is the cell membrane. ATP-binding (A) component of a common energy-coupling factor (ECF) ABC-transporter complex. Unlike classic ABC transporters this ECF transporter provides the energy necessary to transport a number of different substrates. This Bacillus subtilis (strain 168) protein is Energy-coupling factor transporter ATP-binding protein EcfA1.